The following is a 123-amino-acid chain: Small ribosomal subunit protein uS13 (123 aa).

Positions 97–123 (PCRGQRTHTNSRTRKGPRRGVMAKKKK) are disordered.

It belongs to the universal ribosomal protein uS13 family. In terms of assembly, part of the 30S ribosomal subunit. Forms a loose heterodimer with protein S19. Forms two bridges to the 50S subunit in the 70S ribosome.

Located at the top of the head of the 30S subunit, it contacts several helices of the 16S rRNA. In the 70S ribosome it contacts the 23S rRNA (bridge B1a) and protein L5 of the 50S subunit (bridge B1b), connecting the 2 subunits; these bridges are implicated in subunit movement. Contacts the tRNAs in the A and P-sites. The chain is Small ribosomal subunit protein uS13 from Solidesulfovibrio magneticus (strain ATCC 700980 / DSM 13731 / RS-1) (Desulfovibrio magneticus).